An 800-amino-acid chain; its full sequence is Putative antiporter subunit mnhA2 (800 aa).

Transmembrane regions (helical) follow at residues 1 to 21, 33 to 53, 78 to 98, 118 to 138, 167 to 187, 207 to 227, 241 to 261, 273 to 293, 300 to 320, 331 to 351, 387 to 407, 424 to 444, 472 to 492, 527 to 547, 595 to 615, 627 to 647, 651 to 671, 676 to 696, 712 to 732, and 768 to 788; these read MSLV…LLMS, IALV…PSVA, GLSL…FFYA, LFMF…MYIF, FMIT…LYIM, GLFI…SAQF, TPVS…FLLL, YVYI…ITAL, GILA…VGIG, IASI…NHAI, LVMT…GFLS, FSLI…VFTF, PWLF…IFFV, GFNI…VLAI, IIMT…RIGL, GALE…LIFI, LTMV…FIAM, LALT…VSFS, IIKI…IFIT, and LDTL…YTLL.

This sequence belongs to the CPA3 antiporters (TC 2.A.63) subunit A family. May form a heterooligomeric complex that consists of seven subunits: mnhA2, mnhB2, mnhC2, mnhD2, mnhE2, mnhF2 and mnhG2.

It localises to the cell membrane. The sequence is that of Putative antiporter subunit mnhA2 (mnhA2) from Staphylococcus aureus (strain USA300).